The chain runs to 685 residues: E3 ubiquitin ligase Rnf157 (685 aa).

A lipid anchor (N-myristoyl glycine) is attached at glycine 2. The segment at 276-315 (ECVVCLSDVRDTLILPCRHLCLCNTCADTLRYQANNCPIC) adopts an RING-type zinc-finger fold. The short motif at 329-332 (RKKL) is the D-box 1 element. 3 disordered regions span residues 339-361 (SFNP…ENIP), 433-584 (LSKS…AGEQ), and 650-672 (LGGR…EASA). A compositionally biased stretch (low complexity) spans 434–443 (SKSISQNSSV). The span at 478-537 (ESENLTLSSSGAVDQSSCTGTPLSSTISSPEDPASSSLAQSVMSMASSQISTDTVSSMSG) shows a compositional bias: polar residues. Over residues 552 to 561 (PSPRAASRAP) the composition is skewed to low complexity. The D-box 2 motif lies at 657–660 (ARPR).

In terms of assembly, interacts with APBB1. Interacts with CHD1; CHD1-binding controls RNF157 stability. Also interacts with ATRN, MEGF8, TECR, MSI2, PLRG1, BYSL, MTERF3, PSMA1, MRPS18B, PRPF4, FASTKD2, SLC25A1, SMU1, CNOT9, MRPS2, MAGT1, FXR2, EMD, PSMD8, HDAC1, RAN, HSD17B12, TXNDC5 and MRPL19.

The protein localises to the cytoplasm. The catalysed reaction is S-ubiquitinyl-[E2 ubiquitin-conjugating enzyme]-L-cysteine + [acceptor protein]-L-lysine = [E2 ubiquitin-conjugating enzyme]-L-cysteine + N(6)-ubiquitinyl-[acceptor protein]-L-lysine.. Its function is as follows. E3 ubiquitin ligase that ubiquitinates APBB1 for its degradation by the proteasome and thus prevents apoptosis and promotes survival of neurons. Has a dual role in neurons as it is also required for dendrite growth and maintenance for which its ligase activity is not critical. May act as a scaffold molecule to regulate this process. Acts as a downstream effector of the interconnected PI3K and MAPK signaling pathways and thus participates in the regulation of the cell cycle. This Mus musculus (Mouse) protein is E3 ubiquitin ligase Rnf157 (Rnf157).